Reading from the N-terminus, the 81-residue chain is Photosystem I iron-sulfur center (81 aa).

4Fe-4S ferredoxin-type domains are found at residues 2–31 (SHAVKIYDTCIGCTQCVRACPLDVLEMVPW) and 37–68 (GQIASSPRTEDCVGCKRCETACPTDFLSIRVY). Positions 11, 14, 17, 21, 48, 51, 54, and 58 each coordinate [4Fe-4S] cluster.

In terms of assembly, the cyanobacterial PSI reaction center is composed of one copy each of PsaA,B,C,D,E,F,I,J,K,L,M and X, and forms trimeric complexes. Requires [4Fe-4S] cluster as cofactor.

Its subcellular location is the cellular thylakoid membrane. The enzyme catalyses reduced [plastocyanin] + hnu + oxidized [2Fe-2S]-[ferredoxin] = oxidized [plastocyanin] + reduced [2Fe-2S]-[ferredoxin]. Apoprotein for the two 4Fe-4S centers FA and FB of photosystem I (PSI); essential for photochemical activity. FB is the terminal electron acceptor of PSI, donating electrons to ferredoxin. The C-terminus interacts with PsaA/B/D and helps assemble the protein into the PSI complex. Required for binding of PsaD and PsaE to PSI. PSI is a plastocyanin/cytochrome c6-ferredoxin oxidoreductase, converting photonic excitation into a charge separation, which transfers an electron from the donor P700 chlorophyll pair to the spectroscopically characterized acceptors A0, A1, FX, FA and FB in turn. In Synechococcus sp. (strain WH7803), this protein is Photosystem I iron-sulfur center.